Consider the following 88-residue polypeptide: DNA-directed RNA polymerase subunit omega (88 aa).

It belongs to the RNA polymerase subunit omega family. In terms of assembly, the RNAP catalytic core consists of 2 alpha, 1 beta, 1 beta' and 1 omega subunit. When a sigma factor is associated with the core the holoenzyme is formed, which can initiate transcription.

It catalyses the reaction RNA(n) + a ribonucleoside 5'-triphosphate = RNA(n+1) + diphosphate. Functionally, promotes RNA polymerase assembly. Latches the N- and C-terminal regions of the beta' subunit thereby facilitating its interaction with the beta and alpha subunits. This Yersinia pestis (strain Pestoides F) protein is DNA-directed RNA polymerase subunit omega.